The following is an 88-amino-acid chain: Small ribosomal subunit protein bS20 (88 aa).

The tract at residues 1–27 (MANSKSAKKRALQSEKRRQHNASRRSM) is disordered.

It belongs to the bacterial ribosomal protein bS20 family.

In terms of biological role, binds directly to 16S ribosomal RNA. This Shewanella woodyi (strain ATCC 51908 / MS32) protein is Small ribosomal subunit protein bS20.